The primary structure comprises 471 residues: 5-hydroxytryptamine receptor 2A (471 aa).

The Extracellular portion of the chain corresponds to Met1–Leu80. Asn38 carries N-linked (GlcNAc...) asparagine glycosylation. A helical membrane pass occupies residues Thr81–Met97. The Cytoplasmic portion of the chain corresponds to Ala98–Tyr111. A helical membrane pass occupies residues Phe112–Tyr137. Over Gly138–Lys146 the chain is Extracellular. A helical transmembrane segment spans residues Leu147 to Leu171. Residues Cys148 and Cys227 are joined by a disulfide bond. Asp155 serves as a coordination point for serotonin. The DRY motif; important for ligand-induced conformation changes motif lies at Asp172 to Tyr174. Over Asp172 to Lys191 the chain is Cytoplasmic. Residues Ala192–Leu215 form a helical membrane-spanning segment. Over Gln216–Asp232 the chain is Extracellular. A helical membrane pass occupies residues Asn233–Ile258. Residues Lys259–Cys322 lie on the Cytoplasmic side of the membrane. Ser280 is subject to Phosphoserine. Residues Lys323–Ile348 traverse the membrane as a helical segment. A serotonin-binding site is contributed by Asn343. Cys349 and Cys353 are joined by a disulfide. The Extracellular portion of the chain corresponds to Cys349–Asp356. The helical transmembrane segment at Val357–Leu382 threads the bilayer. The short motif at Asn376–Tyr380 is the NPxxY motif; important for ligand-induced conformation changes and signaling element. Residues Phe383 to Val471 lie on the Cytoplasmic side of the membrane. The disordered stretch occupies residues Lys450 to Val471. Residues Gln451–Asn465 show a composition bias toward basic and acidic residues. Residues Ser469–Val471 carry the PDZ-binding motif.

The protein belongs to the G-protein coupled receptor 1 family. Interacts (via C-terminus) with MPDZ and PATJ. May interact (via C-terminus) with MPP3, PRDX6, DLG4, DLG1, CASK, APBA1 and MAGI2. Interacts with GRM2 and DRD2; this may affect signaling.

The protein localises to the cell membrane. The protein resides in the cell projection. Its subcellular location is the dendrite. It is found in the axon. It localises to the cytoplasmic vesicle. The protein localises to the membrane. The protein resides in the caveola. Its subcellular location is the presynapse. G-protein coupled receptor activity is regulated by lipids: oleamide increases HTR2A-mediated activity. Its function is as follows. G-protein coupled receptor for 5-hydroxytryptamine (serotonin). Also functions as a receptor for various drugs and psychoactive substances, including mescaline, psilocybin, 1-(2,5-dimethoxy-4-iodophenyl)-2-aminopropane (DOI) and lysergic acid diethylamide (LSD). Ligand binding causes a conformation change that triggers signaling via guanine nucleotide-binding proteins (G proteins) and modulates the activity of downstream effectors. HTR2A is coupled to G(q)/G(11) G alpha proteins and activates phospholipase C-beta, releasing diacylglycerol (DAG) and inositol 1,4,5-trisphosphate (IP3) second messengers that modulate the activity of phosphatidylinositol 3-kinase and promote the release of Ca(2+) ions from intracellular stores, respectively. Beta-arrestin family members inhibit signaling via G proteins and mediate activation of alternative signaling pathways. Affects neural activity, perception, cognition and mood. Plays a role in the regulation of behavior, including responses to anxiogenic situations and psychoactive substances. Plays a role in intestinal smooth muscle contraction, and may play a role in arterial vasoconstriction. This chain is 5-hydroxytryptamine receptor 2A (HTR2A), found in Pongo pygmaeus (Bornean orangutan).